We begin with the raw amino-acid sequence, 230 residues long: Large ribosomal subunit protein uL1 (230 aa).

It belongs to the universal ribosomal protein uL1 family. As to quaternary structure, part of the 50S ribosomal subunit.

Functionally, binds directly to 23S rRNA. The L1 stalk is quite mobile in the ribosome, and is involved in E site tRNA release. In terms of biological role, protein L1 is also a translational repressor protein, it controls the translation of the L11 operon by binding to its mRNA. The polypeptide is Large ribosomal subunit protein uL1 (Nitrobacter winogradskyi (strain ATCC 25391 / DSM 10237 / CIP 104748 / NCIMB 11846 / Nb-255)).